The sequence spans 262 residues: Short-chain Z-isoprenyl diphosphate synthase (262 aa).

Residue Asp-40 is part of the active site. Mg(2+) is bound at residue Asp-40. Residues 41 to 44, Trp-45, and 86 to 88 contribute to the substrate site; these read GNRR and STE. Asn-89 functions as the Proton acceptor in the catalytic mechanism. Substrate-binding positions include Arg-92, Arg-211, and 217–219; that span reads RLS. Glu-230 provides a ligand contact to Mg(2+).

Belongs to the UPP synthase family. Z-FPP synthase subfamily. Mg(2+) is required as a cofactor.

The enzyme catalyses isopentenyl diphosphate + (2E)-geranyl diphosphate = (2Z,6E)-farnesyl diphosphate + diphosphate. It participates in phospholipid metabolism; decaprenyl phosphate biosynthesis. Its function is as follows. Generates Z-farnesyl diphosphate (Z-FPP) from isopentenyl pyrophosphate (IPP). Z-FPP is the precursor of decaprenyl diphosphate, which has a central role in the biosynthesis of the mycobacterial cell wall. The polypeptide is Short-chain Z-isoprenyl diphosphate synthase (Mycobacterium bovis (strain ATCC BAA-935 / AF2122/97)).